Here is a 442-residue protein sequence, read N- to C-terminus: UDP-N-acetylmuramate--L-alanine ligase (442 aa).

109-115 (GAHGKTS) is a binding site for ATP.

Belongs to the MurCDEF family.

It is found in the cytoplasm. It catalyses the reaction UDP-N-acetyl-alpha-D-muramate + L-alanine + ATP = UDP-N-acetyl-alpha-D-muramoyl-L-alanine + ADP + phosphate + H(+). It participates in cell wall biogenesis; peptidoglycan biosynthesis. Cell wall formation. This chain is UDP-N-acetylmuramate--L-alanine ligase, found in Streptococcus pyogenes serotype M3 (strain SSI-1).